The chain runs to 301 residues: Amine sulfotransferase (301 aa).

46–51 is a 3'-phosphoadenylyl sulfate binding site; it reads KSGTVW. The active-site Proton acceptor is the His-101. Residues Arg-123, Ser-131, Tyr-186, 220-225, and 252-254 each bind 3'-phosphoadenylyl sulfate; these read ATFENM and RKG.

It belongs to the sulfotransferase 1 family. As to expression, expressed in male liver.

It is found in the cytoplasm. The catalysed reaction is a primary amine + 3'-phosphoadenylyl sulfate = a sulfamate + adenosine 3',5'-bisphosphate + 2 H(+). Functionally, sulfotransferase that utilizes 3'-phospho-5'-adenylyl sulfate (PAPS) as sulfonate donor to catalyze the N-sulfonation of amines (PTHP, aniline, 4-chloroaniline, 2-naphthylamine). In Oryctolagus cuniculus (Rabbit), this protein is Amine sulfotransferase (SULT3A1).